The primary structure comprises 322 residues: Germ cell-specific gene 1-like protein (322 aa).

Topologically, residues 1 to 8 (MKTSRRGR) are cytoplasmic. The helical transmembrane segment at 9 to 29 (ALLAVALNLLALLFATTAFLT) threads the bilayer. Residues 30-122 (TYWCQGTQRV…FIDLAPASEK (93 aa)) lie on the Extracellular side of the membrane. A helical transmembrane segment spans residues 123 to 143 (GVLWLSVVSEVLYILLLVVGF). Residues 144 to 163 (SLMCLELLHSSSVIDGLKLN) are Cytoplasmic-facing. The chain crosses the membrane as a helical span at residues 164 to 184 (AFAAVFTVLSGLLGMVAHMMY). Over 185–207 (TQVFQVTVSLGPEDWRPHSWDYG) the chain is Extracellular. Residues 208–228 (WSFCLAWGSFTCCMAASVTTL) form a helical membrane-spanning segment. Residues 229 to 322 (NSYTKTVIEF…RQCWVLGHWV (94 aa)) lie on the Cytoplasmic side of the membrane. Residue Ser-274 is modified to Phosphoserine.

This sequence belongs to the GSG1 family. Component of the inner core of AMPAR complexes. AMPAR complexes consist of an inner core made of 4 pore-forming GluA/GRIA proteins (GRIA1, GRIA2, GRIA3 and GRIA4) and 4 major auxiliary subunits arranged in a twofold symmetry. One of the two pairs of distinct binding sites is occupied either by CNIH2, CNIH3 or CACNG2, CACNG3. The other harbors CACNG2, CACNG3, CACNG4, CACNG8 or GSG1L. This inner core of AMPAR complexes is complemented by outer core constituents binding directly to the GluA/GRIA proteins at sites distinct from the interaction sites of the inner core constituents. Outer core constituents include at least PRRT1, PRRT2, CKAMP44/SHISA9, FRRS1L and NRN1. The proteins of the inner and outer core serve as a platform for other, more peripherally associated AMPAR constituents. Alone or in combination, these auxiliary subunits control the gating and pharmacology of the AMPAR complexes and profoundly impact their biogenesis and protein processing. In terms of tissue distribution, expressed in the brain (at protein level).

It is found in the cell membrane. The protein localises to the synapse. Its function is as follows. As a component of the inner core of AMPAR complexes, modifies AMPA receptor (AMPAR) gating. The sequence is that of Germ cell-specific gene 1-like protein (Gsg1l) from Rattus norvegicus (Rat).